Reading from the N-terminus, the 211-residue chain is B3 domain-containing protein At5g42700 (211 aa).

Residues 110–201 constitute a DNA-binding region (TF-B3); it reads FVKSMLQSHV…AFKVYITRVG (92 aa).

It is found in the nucleus. This is B3 domain-containing protein At5g42700 from Arabidopsis thaliana (Mouse-ear cress).